Reading from the N-terminus, the 315-residue chain is DNA-directed RNA polymerase subunit alpha (315 aa).

Residues 1-228 are alpha N-terminal domain (alpha-NTD); the sequence is MLEIEKPKIE…EHFKLFMTLT (228 aa). The tract at residues 245-315 is alpha C-terminal domain (alpha-CTD); that stretch reads KEKVLEMTIE…LGLSLKLNDE (71 aa).

The protein belongs to the RNA polymerase alpha chain family. As to quaternary structure, homodimer. The RNAP catalytic core consists of 2 alpha, 1 beta, 1 beta' and 1 omega subunit. When a sigma factor is associated with the core the holoenzyme is formed, which can initiate transcription.

It carries out the reaction RNA(n) + a ribonucleoside 5'-triphosphate = RNA(n+1) + diphosphate. DNA-dependent RNA polymerase catalyzes the transcription of DNA into RNA using the four ribonucleoside triphosphates as substrates. The polypeptide is DNA-directed RNA polymerase subunit alpha (Clostridium acetobutylicum (strain ATCC 824 / DSM 792 / JCM 1419 / IAM 19013 / LMG 5710 / NBRC 13948 / NRRL B-527 / VKM B-1787 / 2291 / W)).